The sequence spans 753 residues: Rho guanine nucleotide exchange factor gef1 (753 aa).

3 disordered regions span residues 52-150 (SNSY…DRNR), 175-194 (TLRKIHTNTSSNGTSRRVSG), and 200-245 (AQNS…ASLL). Polar residues-rich tracts occupy residues 94–105 (DPQTPNTPPVSS), 114–141 (GSFNLPNSNMSHSLNGDSTASNSSTLTP), 181–191 (TNTSSNGTSRR), and 200–220 (AQNSSETSSNRTSAYLPGSST). Low complexity predominate over residues 230 to 245 (TLASMPSSHSSTASLL). The 197-residue stretch at 311 to 507 (KRANLIKELV…QELISGINQK (197 aa)) folds into the DH domain.

Interacts with cdc42.

The protein localises to the cytoplasm. Has a role in the control of cell polarity and cytokinesis. Involved in bipolar growth, via modulation of cdc42-shk1-orb6 signaling, and septum formation. Stimulates guanine nucleotide exchange of cdc42. This Schizosaccharomyces pombe (strain 972 / ATCC 24843) (Fission yeast) protein is Rho guanine nucleotide exchange factor gef1 (gef1).